A 522-amino-acid chain; its full sequence is F-box/LRR-repeat protein 16 (522 aa).

An F-box domain is found at 38 to 84 (YDFTANLPDDCLAHIFQFLSAGDRKRCSLVSKRWLLVDGQNRHRLSL). LRR repeat units follow at residues 115–140 (SFSL…KLRG), 141–166 (CREI…SCGS), 169–191 (FGAK…SLKR), 266–290 (RLQV…HIVK), 291–316 (TPDC…HIDG), 319–344 (VKRI…VLIG), 348–369 (TYMS…ALCG), 370–393 (SGTI…KFCI), 395–420 (GCLI…KVKK), and 421–447 (CSLV…DDDE).

In Arabidopsis thaliana (Mouse-ear cress), this protein is F-box/LRR-repeat protein 16 (FBL16).